The chain runs to 141 residues: Nucleoside diphosphate kinase (141 aa).

The ATP site is built by Lys-11, Phe-59, Arg-87, Thr-93, Arg-104, and Asn-114. His-117 (pros-phosphohistidine intermediate) is an active-site residue.

Belongs to the NDK family. As to quaternary structure, homotetramer. The cofactor is Mg(2+).

The protein localises to the cytoplasm. It carries out the reaction a 2'-deoxyribonucleoside 5'-diphosphate + ATP = a 2'-deoxyribonucleoside 5'-triphosphate + ADP. The enzyme catalyses a ribonucleoside 5'-diphosphate + ATP = a ribonucleoside 5'-triphosphate + ADP. In terms of biological role, major role in the synthesis of nucleoside triphosphates other than ATP. The ATP gamma phosphate is transferred to the NDP beta phosphate via a ping-pong mechanism, using a phosphorylated active-site intermediate. The sequence is that of Nucleoside diphosphate kinase from Vibrio parahaemolyticus serotype O3:K6 (strain RIMD 2210633).